A 367-amino-acid chain; its full sequence is 2-aminoethylphosphonate--pyruvate transaminase (367 aa).

An N6-(pyridoxal phosphate)lysine modification is found at Lys194.

This sequence belongs to the class-V pyridoxal-phosphate-dependent aminotransferase family. PhnW subfamily. As to quaternary structure, homodimer. Requires pyridoxal 5'-phosphate as cofactor.

It carries out the reaction (2-aminoethyl)phosphonate + pyruvate = phosphonoacetaldehyde + L-alanine. Its function is as follows. Involved in phosphonate degradation. This is 2-aminoethylphosphonate--pyruvate transaminase from Salmonella agona (strain SL483).